A 270-amino-acid polypeptide reads, in one-letter code: tRNA pseudouridine synthase A (270 aa).

The Nucleophile role is filled by Asp60. The RNA binding stretch occupies residues 107–111 (FHARF). Tyr118 provides a ligand contact to substrate. Residues 168–172 (QCQSR) are interaction with tRNA.

Belongs to the tRNA pseudouridine synthase TruA family. Homodimer.

It catalyses the reaction uridine(38/39/40) in tRNA = pseudouridine(38/39/40) in tRNA. Functionally, formation of pseudouridine at positions 38, 39 and 40 in the anticodon stem and loop of transfer RNAs. The sequence is that of tRNA pseudouridine synthase A from Escherichia coli (strain 55989 / EAEC).